A 174-amino-acid chain; its full sequence is Gamma-crystallin C (174 aa).

Beta/gamma crystallin 'Greek key' domains are found at residues 2–40 (GKIT…RVES) and 41–83 (GCWM…CLIP). Cys-23 carries the S-methylcysteine modification. The connecting peptide stretch occupies residues 84-87 (QTGS). Beta/gamma crystallin 'Greek key' domains follow at residues 88–128 (HRLR…HVLE) and 129–171 (GCWV…RRVV).

This sequence belongs to the beta/gamma-crystallin family. As to quaternary structure, monomer.

In terms of biological role, crystallins are the dominant structural components of the vertebrate eye lens. The polypeptide is Gamma-crystallin C (CRYGC) (Macaca mulatta (Rhesus macaque)).